A 106-amino-acid chain; its full sequence is Small ribosomal subunit protein bS16 (106 aa).

It belongs to the bacterial ribosomal protein bS16 family.

In Protochlamydia amoebophila (strain UWE25), this protein is Small ribosomal subunit protein bS16.